The sequence spans 231 residues: Phosphatidylserine decarboxylase proenzyme (231 aa).

Ser188 (schiff-base intermediate with substrate; via pyruvic acid) is an active-site residue. Ser188 bears the Pyruvic acid (Ser); by autocatalysis mark.

This sequence belongs to the phosphatidylserine decarboxylase family. PSD-A subfamily. In terms of assembly, heterodimer of a large membrane-associated beta subunit and a small pyruvoyl-containing alpha subunit. Requires pyruvate as cofactor. Post-translationally, is synthesized initially as an inactive proenzyme. Formation of the active enzyme involves a self-maturation process in which the active site pyruvoyl group is generated from an internal serine residue via an autocatalytic post-translational modification. Two non-identical subunits are generated from the proenzyme in this reaction, and the pyruvate is formed at the N-terminus of the alpha chain, which is derived from the carboxyl end of the proenzyme. The post-translation cleavage follows an unusual pathway, termed non-hydrolytic serinolysis, in which the side chain hydroxyl group of the serine supplies its oxygen atom to form the C-terminus of the beta chain, while the remainder of the serine residue undergoes an oxidative deamination to produce ammonia and the pyruvoyl prosthetic group on the alpha chain.

It is found in the cell membrane. The enzyme catalyses a 1,2-diacyl-sn-glycero-3-phospho-L-serine + H(+) = a 1,2-diacyl-sn-glycero-3-phosphoethanolamine + CO2. Its pathway is phospholipid metabolism; phosphatidylethanolamine biosynthesis; phosphatidylethanolamine from CDP-diacylglycerol: step 2/2. Its function is as follows. Catalyzes the formation of phosphatidylethanolamine (PtdEtn) from phosphatidylserine (PtdSer). This Rickettsia peacockii (strain Rustic) protein is Phosphatidylserine decarboxylase proenzyme.